A 158-amino-acid chain; its full sequence is MRKRAAKKRPLLPDPRFNDQLVTRFVNNLMWDGKKSTAFKVFYDAMDIVEAKKQDQEKSSVDIWKDALTNVMPHVEVRSRRVGGATFQIPMQIRPDRKISMAMKWMILYSRRRNEKSMAQKLASEVLAAAKEEGAAVKKRMDTHKMAEANKAFSHFRF.

It belongs to the universal ribosomal protein uS7 family. Part of the 30S ribosomal subunit. Contacts proteins S9 and S11.

In terms of biological role, one of the primary rRNA binding proteins, it binds directly to 16S rRNA where it nucleates assembly of the head domain of the 30S subunit. Is located at the subunit interface close to the decoding center, probably blocks exit of the E-site tRNA. This is Small ribosomal subunit protein uS7 from Flavobacterium psychrophilum (strain ATCC 49511 / DSM 21280 / CIP 103535 / JIP02/86).